We begin with the raw amino-acid sequence, 481 residues long: Aromatic amino acid aminotransferase C1773.13 (481 aa).

This sequence belongs to the class-I pyridoxal-phosphate-dependent aminotransferase family. It depends on pyridoxal 5'-phosphate as a cofactor.

Its subcellular location is the cytoplasm. It catalyses the reaction an aromatic L-alpha-amino acid + 2-oxoglutarate = an aromatic oxo-acid + L-glutamate. Its function is as follows. Has aromatic amino acid transaminase activity. This Schizosaccharomyces pombe (strain 972 / ATCC 24843) (Fission yeast) protein is Aromatic amino acid aminotransferase C1773.13.